Consider the following 487-residue polypeptide: Malonate-semialdehyde dehydrogenase (487 aa).

Residues Ala-150, Phe-152, Lys-176, Glu-179, Arg-180, Ser-229, and Thr-251 each contribute to the NAD(+) site. Cys-284 acts as the Nucleophile in catalysis. Glu-382 provides a ligand contact to NAD(+).

The protein belongs to the aldehyde dehydrogenase family. IolA subfamily. Homotetramer.

It catalyses the reaction 3-oxopropanoate + NAD(+) + CoA + H2O = hydrogencarbonate + acetyl-CoA + NADH + H(+). The catalysed reaction is 2-methyl-3-oxopropanoate + NAD(+) + CoA + H2O = propanoyl-CoA + hydrogencarbonate + NADH + H(+). It functions in the pathway polyol metabolism; myo-inositol degradation into acetyl-CoA; acetyl-CoA from myo-inositol: step 7/7. Its function is as follows. Catalyzes the oxidation of malonate semialdehyde (MSA) and methylmalonate semialdehyde (MMSA) into acetyl-CoA and propanoyl-CoA, respectively. Is involved in a myo-inositol catabolic pathway. Bicarbonate, and not CO2, is the end-product of the enzymatic reaction. The protein is Malonate-semialdehyde dehydrogenase of Bacillus subtilis (strain 168).